A 192-amino-acid polypeptide reads, in one-letter code: Potassium-transporting ATPase KdpC subunit (192 aa).

A helical membrane pass occupies residues 7–27 (PLIVIFAVLTAVTGLAYPAVM).

The protein belongs to the KdpC family. As to quaternary structure, the system is composed of three essential subunits: KdpA, KdpB and KdpC.

The protein resides in the cell inner membrane. In terms of biological role, part of the high-affinity ATP-driven potassium transport (or Kdp) system, which catalyzes the hydrolysis of ATP coupled with the electrogenic transport of potassium into the cytoplasm. This subunit acts as a catalytic chaperone that increases the ATP-binding affinity of the ATP-hydrolyzing subunit KdpB by the formation of a transient KdpB/KdpC/ATP ternary complex. The sequence is that of Potassium-transporting ATPase KdpC subunit from Paraburkholderia phytofirmans (strain DSM 17436 / LMG 22146 / PsJN) (Burkholderia phytofirmans).